A 462-amino-acid polypeptide reads, in one-letter code: Argininosuccinate lyase (462 aa).

This sequence belongs to the lyase 1 family. Argininosuccinate lyase subfamily.

The protein localises to the cytoplasm. The catalysed reaction is 2-(N(omega)-L-arginino)succinate = fumarate + L-arginine. The protein operates within amino-acid biosynthesis; L-arginine biosynthesis; L-arginine from L-ornithine and carbamoyl phosphate: step 3/3. The protein is Argininosuccinate lyase of Methylobacterium nodulans (strain LMG 21967 / CNCM I-2342 / ORS 2060).